The following is a 379-amino-acid chain: Cobalt-precorrin-5B C(1)-methyltransferase (379 aa).

It belongs to the CbiD family.

It carries out the reaction Co-precorrin-5B + S-adenosyl-L-methionine = Co-precorrin-6A + S-adenosyl-L-homocysteine. It functions in the pathway cofactor biosynthesis; adenosylcobalamin biosynthesis; cob(II)yrinate a,c-diamide from sirohydrochlorin (anaerobic route): step 6/10. Catalyzes the methylation of C-1 in cobalt-precorrin-5B to form cobalt-precorrin-6A. The protein is Cobalt-precorrin-5B C(1)-methyltransferase of Edwardsiella ictaluri (strain 93-146).